The chain runs to 284 residues: Bifunctional protein FolD (284 aa).

NADP(+) contacts are provided by residues 164 to 166 and serine 189; that span reads GRS.

It belongs to the tetrahydrofolate dehydrogenase/cyclohydrolase family. In terms of assembly, homodimer.

The enzyme catalyses (6R)-5,10-methylene-5,6,7,8-tetrahydrofolate + NADP(+) = (6R)-5,10-methenyltetrahydrofolate + NADPH. The catalysed reaction is (6R)-5,10-methenyltetrahydrofolate + H2O = (6R)-10-formyltetrahydrofolate + H(+). It participates in one-carbon metabolism; tetrahydrofolate interconversion. Its function is as follows. Catalyzes the oxidation of 5,10-methylenetetrahydrofolate to 5,10-methenyltetrahydrofolate and then the hydrolysis of 5,10-methenyltetrahydrofolate to 10-formyltetrahydrofolate. This is Bifunctional protein FolD from Listeria monocytogenes serovar 1/2a (strain ATCC BAA-679 / EGD-e).